The sequence spans 373 residues: Glutamate 5-kinase (373 aa).

Residue lysine 15 participates in ATP binding. Substrate is bound by residues serine 55, aspartate 142, and asparagine 154. ATP contacts are provided by residues 174-175 and 216-222; these read TD and TGGMATK. One can recognise a PUA domain in the interval 281-359; that stretch reads AGRIIVDDGA…SRIEAILGYR (79 aa).

The protein belongs to the glutamate 5-kinase family.

Its subcellular location is the cytoplasm. The enzyme catalyses L-glutamate + ATP = L-glutamyl 5-phosphate + ADP. Its pathway is amino-acid biosynthesis; L-proline biosynthesis; L-glutamate 5-semialdehyde from L-glutamate: step 1/2. Its function is as follows. Catalyzes the transfer of a phosphate group to glutamate to form L-glutamate 5-phosphate. The sequence is that of Glutamate 5-kinase from Pelobacter propionicus (strain DSM 2379 / NBRC 103807 / OttBd1).